Reading from the N-terminus, the 461-residue chain is F-box protein At3g62230 (461 aa).

One can recognise an F-box domain in the interval 7 to 55 (VDIISTLSDFLLVLIISNLSFKEALSTSRLSTRWRHICRETRNISFRED).

As to quaternary structure, part of a SCF (ASK-cullin-F-box) protein ligase complex. Interacts with ASK4.

Its subcellular location is the nucleus. Its pathway is protein modification; protein ubiquitination. Functionally, component of SCF(ASK-cullin-F-box) E3 ubiquitin ligase complexes, which may mediate the ubiquitination and subsequent proteasomal degradation of target proteins. This chain is F-box protein At3g62230, found in Arabidopsis thaliana (Mouse-ear cress).